The following is a 743-amino-acid chain: Alpha-N-acetylglucosaminidase (743 aa).

A signal peptide spans 1 to 23; sequence MEAVAVAAAVGVLLLAGAGGAAG. N-linked (GlcNAc...) asparagine glycosylation is found at Asn-261, Asn-272, Asn-435, Asn-503, Asn-526, and Asn-532.

Belongs to the glycosyl hydrolase 89 family. Monomer and homodimer. Liver, ovary, peripheral blood leukocytes, testis, prostate, spleen, colon, lung, placenta and kidney.

It localises to the lysosome. It carries out the reaction Hydrolysis of terminal non-reducing N-acetyl-D-glucosamine residues in N-acetyl-alpha-D-glucosaminides.. Functionally, involved in the degradation of heparan sulfate. The sequence is that of Alpha-N-acetylglucosaminidase (NAGLU) from Homo sapiens (Human).